The primary structure comprises 914 residues: MSETQKENPYSSTVLLPKTDFPMKADLAKREPAQIQSWKSGQIFRKMKEQRKGKKEFVLHDGPPYANGNFHLGHSLNKIVKDIIIKSKSLAGFYADMIPGWDCHGLPIEVQVLKNLGKKARETGPEELRRLCRNYAEEFVGKQGEDLSRFLCFWEEDRIYKTMSPGFEAKIVEVFGELFQNGYVYRGKKPVYWSIDLATAHAEAEIEYYPHVSPSIYVKFPIVGEQKKFCLIWTTTPWTLPANLGICFNRKIEYSFFKTESGEELILADGLAESVTSTTGVSLNKVKSISSDELSVLKFQHPFMDRISISLFGDHVTLDAGTGCVHTAPGHGQDDYKVGLAAGLEPFSPVDDYGKYTDEFPLMQGKKVFDANPEIIQLLKDKGLLLHHSEFEHSYPHSWRSKKPLIFRATPQWFFKMDFNELREKSLSAIDGVQWIPSWGITRIRSMVETRPDWCLSRQRNWGVPIPAFTCESCGQTHIDDVSIQFFTKMVREKGIEIWYSEKAADLLPPGTKCGKCGSDSFKKGNDILDVWFDSGVSSFAVLGERKDEPPADLYFEGSDQHRGWFQSSLWPSMALRGIPPYKTVLTHGYVLDEKGHPMSKSLGNGIDPTADVIQIYGADILRLWVSSLDFRDDIKVGKESLKIVSEQYRKIRNTFRYLLGNLDGHTSEQNLPFEELEELDLFYLSKLSQFAEDVIANYEAYQFHQIYQKLILFCTVTLSQDYFDMIRDRMYCDARNSKTRKSSATALQYILETLCILTAPILSFTAEEVWVSNGKKDSVFLQNFPDLKFWKNQNLEEKFESVLQVREVVQKALEIARQENKLGKSLEAGLEIVSKNGTNLTKILPKETLEILFVVSQVHEKNPGLDVLSFYENEKFSVKVLKPVQVECPRCWRHTEDISKEGDLCGRCKSVVG.

Residues 64–74 (PYANGNFHLGH) carry the 'HIGH' region motif. E557 serves as a coordination point for L-isoleucyl-5'-AMP. Residues 598–602 (PMSKS) carry the 'KMSKS' region motif. ATP is bound at residue K601. 4 residues coordinate Zn(2+): C889, C892, C906, and C909.

This sequence belongs to the class-I aminoacyl-tRNA synthetase family. IleS type 1 subfamily. As to quaternary structure, monomer. It depends on Zn(2+) as a cofactor.

The protein localises to the cytoplasm. It catalyses the reaction tRNA(Ile) + L-isoleucine + ATP = L-isoleucyl-tRNA(Ile) + AMP + diphosphate. Catalyzes the attachment of isoleucine to tRNA(Ile). As IleRS can inadvertently accommodate and process structurally similar amino acids such as valine, to avoid such errors it has two additional distinct tRNA(Ile)-dependent editing activities. One activity is designated as 'pretransfer' editing and involves the hydrolysis of activated Val-AMP. The other activity is designated 'posttransfer' editing and involves deacylation of mischarged Val-tRNA(Ile). This chain is Isoleucine--tRNA ligase, found in Leptospira interrogans serogroup Icterohaemorrhagiae serovar Lai (strain 56601).